The sequence spans 208 residues: Probable GTP-binding protein EngB (208 aa).

The region spanning 25-199 is the EngB-type G domain; it reads TGIEVAFAGR…RQKLDSWYNG (175 aa). GTP contacts are provided by residues 33–40, 60–64, 78–81, 145–148, and 178–180; these read GRSNAGKS, GRTQL, DLPG, TKSD, and FSS. Mg(2+) contacts are provided by S40 and T62.

It belongs to the TRAFAC class TrmE-Era-EngA-EngB-Septin-like GTPase superfamily. EngB GTPase family. Mg(2+) serves as cofactor.

Functionally, necessary for normal cell division and for the maintenance of normal septation. The chain is Probable GTP-binding protein EngB from Enterobacter sp. (strain 638).